Reading from the N-terminus, the 264-residue chain is Carbonic anhydrase 7 (264 aa).

The region spanning 5–262 (HGWGYGQDDG…LKGRVVKASF (258 aa)) is the Alpha-carbonic anhydrase domain. The active-site Proton donor/acceptor is the histidine 66. Positions 96, 98, and 121 each coordinate Zn(2+). 201 to 202 (TT) contributes to the substrate binding site.

It belongs to the alpha-carbonic anhydrase family. Zn(2+) serves as cofactor.

It is found in the cytoplasm. The enzyme catalyses hydrogencarbonate + H(+) = CO2 + H2O. Activated by histamine, L-adrenaline, L- and D-histidine, and L- and D-phenylalanine. Inhibited by coumarins, sulfonamide derivatives such as acetazolamide (AZA), by saccharin and Foscarnet (phosphonoformate trisodium salt). Functionally, reversible hydration of carbon dioxide. This chain is Carbonic anhydrase 7 (CA7), found in Homo sapiens (Human).